A 405-amino-acid chain; its full sequence is L-rhamnonate dehydratase (405 aa).

Positions 33 and 59 each coordinate substrate. Positions 226, 252, and 280 each coordinate Mg(2+). The Proton acceptor role is filled by H329. Position 349 (E349) interacts with substrate.

Belongs to the mandelate racemase/muconate lactonizing enzyme family. RhamD subfamily. Homooctamer; tetramer of dimers. Requires Mg(2+) as cofactor.

It carries out the reaction L-rhamnonate = 2-dehydro-3-deoxy-L-rhamnonate + H2O. Its function is as follows. Catalyzes the dehydration of L-rhamnonate to 2-keto-3-deoxy-L-rhamnonate (KDR). This Escherichia coli O9:H4 (strain HS) protein is L-rhamnonate dehydratase.